The primary structure comprises 486 residues: Ribulose bisphosphate carboxylase large chain (486 aa).

Residues Asn125 and Thr175 each coordinate substrate. Lys177 acts as the Proton acceptor in catalysis. Lys179 contributes to the substrate binding site. Mg(2+)-binding residues include Lys203, Asp205, and Glu206. Position 203 is an N6-carboxylysine (Lys203). The active-site Proton acceptor is the His295. Arg296, His328, and Ser380 together coordinate substrate.

Belongs to the RuBisCO large chain family. Type I subfamily. In terms of assembly, heterohexadecamer of 8 large chains and 8 small chains. Requires Mg(2+) as cofactor.

The enzyme catalyses 2 (2R)-3-phosphoglycerate + 2 H(+) = D-ribulose 1,5-bisphosphate + CO2 + H2O. The catalysed reaction is D-ribulose 1,5-bisphosphate + O2 = 2-phosphoglycolate + (2R)-3-phosphoglycerate + 2 H(+). Its function is as follows. RuBisCO catalyzes two reactions: the carboxylation of D-ribulose 1,5-bisphosphate, the primary event in carbon dioxide fixation, as well as the oxidative fragmentation of the pentose substrate. Both reactions occur simultaneously and in competition at the same active site. The chain is Ribulose bisphosphate carboxylase large chain from Aurantimonas manganoxydans (strain ATCC BAA-1229 / DSM 21871 / SI85-9A1).